A 142-amino-acid chain; its full sequence is Large ribosomal subunit protein uL13 (142 aa).

It belongs to the universal ribosomal protein uL13 family. In terms of assembly, part of the 50S ribosomal subunit.

Functionally, this protein is one of the early assembly proteins of the 50S ribosomal subunit, although it is not seen to bind rRNA by itself. It is important during the early stages of 50S assembly. The chain is Large ribosomal subunit protein uL13 from Vibrio parahaemolyticus serotype O3:K6 (strain RIMD 2210633).